The sequence spans 434 residues: Putative peptidase B (434 aa).

Positions 198 and 203 each coordinate Mn(2+). Lysine 210 is a catalytic residue. Mn(2+)-binding residues include aspartate 221, aspartate 280, and glutamate 282. Residue arginine 284 is part of the active site.

It belongs to the peptidase M17 family. As to quaternary structure, homohexamer. It depends on Mn(2+) as a cofactor.

The protein localises to the cytoplasm. The catalysed reaction is Release of an N-terminal amino acid, Xaa, from a peptide or arylamide. Xaa is preferably Glu or Asp but may be other amino acids, including Leu, Met, His, Cys and Gln.. Functionally, probably plays an important role in intracellular peptide degradation. This Haemophilus influenzae (strain ATCC 51907 / DSM 11121 / KW20 / Rd) protein is Putative peptidase B.